The sequence spans 93 residues: Parbolysin P1 (93 aa).

3 disulfides stabilise this stretch: Cys16/Cys37, Cys22/Cys33, and Cys47/Cys60.

This sequence belongs to the worm cytolysin family. In terms of tissue distribution, localized within the skin and proboscis and are most readily isolated from body mucus secretions.

The protein localises to the secreted. In terms of biological role, cytolysin that shows hemolytic activity (on bovine erythrocytes, HC(50)=5.75 mg/ml). This hemolytic activity is completely inhibited by small unilamelar vesicles composed of PC/PG, PC/PI and PC/PS in 1:1 molar ratios (with at least 100 mg/ml concentration). The recombinant protein does not show hemolytic activity, suggesting that it is not properly folded or that it requires a free N-terminal end for its activity. The polypeptide is Parbolysin P1 (Parborlasia corrugatus (Antarctic nemertean worm)).